Consider the following 97-residue polypeptide: Protein SENESCENCE-ASSOCIATED GENE 21, mitochondrial (97 aa).

Residues 1–46 constitute a mitochondrion transit peptide; it reads MARSISNVKIVSAFVSRELSNAIFRRGYAATAAQGSVSSGGRSGAV.

The protein belongs to the LEA type 3 family. In terms of tissue distribution, expressed in roots, stems leaves and flowers, but not in seeds. In short days, observed in cotyledons and roots but absent from rosette leaves.

The protein resides in the mitochondrion. Its function is as follows. Mediates tolerance to oxidative stresses (e.g. hydrogen peroxide H(2)O(2), diamide, menadione and tert-butyl hydroperoxide) by minimizing the negative effects of oxidation and monitoring photosynthesis during stress. Promotes root development. Prevents premature aging (e.g. senescence and flowering). Involved in resistance against compatible pathogens such as Botrytis cinerea and Pseudomonas syringae pv. tomato. The chain is Protein SENESCENCE-ASSOCIATED GENE 21, mitochondrial from Arabidopsis thaliana (Mouse-ear cress).